The following is a 159-amino-acid chain: Fatty acid-binding protein homolog 1 (159 aa).

The first 17 residues, 1-17 (MCAKIALLLVLVGAASA), serve as a signal peptide directing secretion.

Belongs to the calycin superfamily. Fatty-acid binding protein (FABP) family. In terms of tissue distribution, first detected in hypodermal precursor cells at the time of gastrulation. From the two-fold stage through to three-fold stages, expression is localized exclusively to hyp-7 but disappears in newly hatched L1s and subsequent developmental stages. Expression from L1 to adult stages is found in a single neuron in the ventral cord with a process into the nerve ring.

The protein localises to the secreted. May play a role in sequestering potentially toxic fatty acids and their peroxidation products, or it may be involved in the maintenance of the impermeable lipid layer of the eggshell. The sequence is that of Fatty acid-binding protein homolog 1 (lbp-1) from Caenorhabditis elegans.